The sequence spans 275 residues: NH(3)-dependent NAD(+) synthetase (275 aa).

ATP is bound at residue 47–54; it reads GISGGQDS. Residue D53 coordinates Mg(2+). R141 contributes to the deamido-NAD(+) binding site. Residue T161 coordinates ATP. A Mg(2+)-binding site is contributed by E166. 2 residues coordinate deamido-NAD(+): K174 and D181. K190 and T212 together coordinate ATP. 261–262 contributes to the deamido-NAD(+) binding site; sequence HK.

The protein belongs to the NAD synthetase family. As to quaternary structure, homodimer.

The catalysed reaction is deamido-NAD(+) + NH4(+) + ATP = AMP + diphosphate + NAD(+) + H(+). It functions in the pathway cofactor biosynthesis; NAD(+) biosynthesis; NAD(+) from deamido-NAD(+) (ammonia route): step 1/1. Functionally, catalyzes the ATP-dependent amidation of deamido-NAD to form NAD. Uses ammonia as a nitrogen source. The protein is NH(3)-dependent NAD(+) synthetase of Lacticaseibacillus casei (strain BL23) (Lactobacillus casei).